We begin with the raw amino-acid sequence, 429 residues long: Glutamyl-tRNA reductase (429 aa).

Substrate is bound by residues 56-59 (TCNR), serine 119, 124-126 (EPQ), and glutamine 130. Cysteine 57 serves as the catalytic Nucleophile. Residue 199 to 204 (GAGEMI) coordinates NADP(+).

It belongs to the glutamyl-tRNA reductase family. Homodimer.

The catalysed reaction is (S)-4-amino-5-oxopentanoate + tRNA(Glu) + NADP(+) = L-glutamyl-tRNA(Glu) + NADPH + H(+). It participates in porphyrin-containing compound metabolism; protoporphyrin-IX biosynthesis; 5-aminolevulinate from L-glutamyl-tRNA(Glu): step 1/2. Functionally, catalyzes the NADPH-dependent reduction of glutamyl-tRNA(Glu) to glutamate 1-semialdehyde (GSA). This Herminiimonas arsenicoxydans protein is Glutamyl-tRNA reductase.